We begin with the raw amino-acid sequence, 112 residues long: MSAPATTQVEILQEGDGKTFPKPGDLVTIHYTGTLENGKKFDSSRDRGKPFQCTIGVGQVIVGWDTGIPKLSVGSRAKLSIPGHEAYGDRGFPGLIPPNATLLFDVELLNVN.

Over residues 1-10 the composition is skewed to polar residues; sequence MSAPATTQVE. Residues 1–20 form a disordered region; the sequence is MSAPATTQVEILQEGDGKTF. Residues 24–112 enclose the PPIase FKBP-type domain; that stretch reads GDLVTIHYTG…LFDVELLNVN (89 aa).

It belongs to the FKBP-type PPIase family. FKBP1 subfamily.

The protein resides in the cytoplasm. It carries out the reaction [protein]-peptidylproline (omega=180) = [protein]-peptidylproline (omega=0). With respect to regulation, inhibited by both FK506 and rapamycin. Functionally, PPIases accelerate the folding of proteins. It catalyzes the cis-trans isomerization of proline imidic peptide bonds in oligopeptides. This chain is FK506-binding protein 1 (FPR1), found in Debaryomyces hansenii (strain ATCC 36239 / CBS 767 / BCRC 21394 / JCM 1990 / NBRC 0083 / IGC 2968) (Yeast).